A 453-amino-acid chain; its full sequence is Flap endonuclease 1 (453 aa).

Residues Met1–Arg105 are N-domain. A Mg(2+)-binding site is contributed by Asp34. Arg47 and Arg71 together coordinate DNA. Mg(2+)-binding residues include Asp87, Glu159, Glu161, Asp180, and Asp182. Residues Asp123–His254 are I-domain. Glu159 contributes to the DNA binding site. DNA contacts are provided by Gly232 and Asp234. Asp234 is a binding site for Mg(2+). 2 disordered regions span residues Glu273–Ser336 and Arg409–Asn453. The span at Lys320–Val333 shows a compositional bias: basic residues. Residues Gln406–Phe414 are interaction with PCNA. Residues Lys417–Ser446 show a composition bias toward basic and acidic residues.

This sequence belongs to the XPG/RAD2 endonuclease family. FEN1 subfamily. In terms of assembly, interacts with PCNA. Three molecules of FEN1 bind to one PCNA trimer with each molecule binding to one PCNA monomer. PCNA stimulates the nuclease activity without altering cleavage specificity. The cofactor is Mg(2+). Post-translationally, phosphorylated. Phosphorylation upon DNA damage induces relocalization to the nuclear plasma.

The protein localises to the nucleus. It is found in the nucleolus. It localises to the nucleoplasm. Its subcellular location is the mitochondrion. Structure-specific nuclease with 5'-flap endonuclease and 5'-3' exonuclease activities involved in DNA replication and repair. During DNA replication, cleaves the 5'-overhanging flap structure that is generated by displacement synthesis when DNA polymerase encounters the 5'-end of a downstream Okazaki fragment. It enters the flap from the 5'-end and then tracks to cleave the flap base, leaving a nick for ligation. Also involved in the long patch base excision repair (LP-BER) pathway, by cleaving within the apurinic/apyrimidinic (AP) site-terminated flap. Acts as a genome stabilization factor that prevents flaps from equilibrating into structures that lead to duplications and deletions. Also possesses 5'-3' exonuclease activity on nicked or gapped double-stranded DNA, and exhibits RNase H activity. Also involved in replication and repair of rDNA and in repairing mitochondrial DNA. The sequence is that of Flap endonuclease 1 from Cryptococcus neoformans var. neoformans serotype D (strain B-3501A) (Filobasidiella neoformans).